We begin with the raw amino-acid sequence, 328 residues long: Arabinose 5-phosphate isomerase KdsD (328 aa).

The region spanning 42–184 is the SIS domain; it reads CEKMFWCKGK…AVALLKARGF (143 aa). Residues 75-76, His82, His88, 114-123, 148-150, Thr222, and Asp275 each bind substrate; these read GT, ALIPVLKRLH, and KVA. His82 is a Zn(2+) binding site. The region spanning 210 to 268 is the CBS 1 domain; sequence MHTGDEIPHVKKTASLRDALLEVTRKNLGMTVICDDNMMIEGIFTDGDLRRVFDMGVDV. The CBS 2 domain occupies 277-328; sequence MTPGGIRVRPGILAVEALNLMQSRHITSVMVADGDHLLGVLHMHDLLRAGVV.

The protein belongs to the SIS family. GutQ/KpsF subfamily. As to quaternary structure, homotetramer.

The catalysed reaction is D-arabinose 5-phosphate = D-ribulose 5-phosphate. It functions in the pathway carbohydrate biosynthesis; 3-deoxy-D-manno-octulosonate biosynthesis; 3-deoxy-D-manno-octulosonate from D-ribulose 5-phosphate: step 1/3. It participates in bacterial outer membrane biogenesis; lipopolysaccharide biosynthesis. Involved in the biosynthesis of 3-deoxy-D-manno-octulosonate (KDO), a unique 8-carbon sugar component of lipopolysaccharides (LPSs). Catalyzes the reversible aldol-ketol isomerization between D-ribulose 5-phosphate (Ru5P) and D-arabinose 5-phosphate (A5P). The chain is Arabinose 5-phosphate isomerase KdsD (kdsD) from Escherichia coli O6:H1 (strain CFT073 / ATCC 700928 / UPEC).